A 227-amino-acid polypeptide reads, in one-letter code: A-type potassium channel modulatory protein KCNIP1 (227 aa).

Residues 38–94 (LEMTMVCHRPEGLEQLEAQTNFTKRELQVLYRGFKNECPSGVVNEETFKQIYAQFFP) form the EF-hand 1; degenerate domain. EF-hand domains lie at 97–132 (DAST…LLRG), 133–168 (TVHE…IYDM), and 181–216 (TPRQ…DDNI). Asp-146, Asn-148, Asp-150, Tyr-152, Glu-157, Asp-194, Asn-196, Asp-198, and Glu-205 together coordinate Ca(2+). Positions 214–227 (DNIMRSLQLFQNVM) are interaction with KCND2.

The protein belongs to the recoverin family. In terms of assembly, component of heteromultimeric potassium channels. Identified in potassium channel complexes containing KCND1, KCND2, KCND3, KCNIP1, KCNIP2, KCNIP3, KCNIP4, DPP6 and DPP10. Part of a heterooctamer composed of the tetrameric channel and four KCNIP1 chains. Probably part of a complex consisting of KCNIP1, KCNIP2 isoform 3 and KCND2. Self-associates to form homodimers and homotetramers. Interacts with KCNIP2 isoform 3 in a calcium-dependent manner. Interacts with KCND2; this interaction mediates the capture of both the N- and C-terminus of KCND2, thus preventing KCND2 N-type inactivation and modulates the channel gating kinetics. Interacts with KCND3; each KCNIP1 monomer interacts with two adjacent KCND3 subunits, through both the N-terminal inactivation ball of a KCND3 subunit and a C-terminal helix from the adjacent KCND3 subunit, clamping them together; this interaction stabilizes the tetrameric form and modulates the channel gating kinetics namely channel activation and inactivation kinetics and rate of recovery from inactivation. In terms of tissue distribution, detected in hippocampus and in the molecular layer of the dentate gyrus (at protein level). Isoform 1 and isoform 2 are predominantly expressed at equal levels in brain. Colocalizes with KCND3 in inhibitory interneurons in cortex and hippocampus and in striatal interneurons.

It is found in the cell membrane. Its subcellular location is the cytoplasm. It localises to the cell projection. The protein localises to the dendrite. Regulatory subunit of Kv4/D (Shal)-type voltage-gated rapidly inactivating A-type potassium channels. Regulates channel density, inactivation kinetics and rate of recovery from inactivation in a calcium-dependent and isoform-specific manner. Modulates KCND2/Kv4.2 currents. In vitro, modulates KCND1/Kv4.1 currents. Increases the presence of KCND2 at the cell surface. This chain is A-type potassium channel modulatory protein KCNIP1, found in Rattus norvegicus (Rat).